Consider the following 238-residue polypeptide: Ribonuclease-like storage protein (238 aa).

The N-terminal stretch at 1–23 (MRAIYIISVIIVSLSIFSWGGNA) is a signal peptide. Gln37 is an RNA binding site. A disulfide bond links Cys43 and Cys49. Residues His61, Phe109, 112-113 (HE), and 116-117 (KH) each bind RNA. Catalysis depends on His61, which acts as the Proton donor. 2 disulfide bridges follow: Cys76–Cys120 and Cys196–Cys207. Residue Glu113 is part of the active site. His117 (proton acceptor) is an active-site residue.

It belongs to the RNase T2 family. Homodimer. In terms of tissue distribution, root.

Functionally, may act as a storage protein providing a nitrogen source. Seems to have no RNase activity although it has conserved the active site residues. The protein is Ribonuclease-like storage protein of Panax ginseng (Korean ginseng).